The sequence spans 459 residues: tRNA modification GTPase MnmE (459 aa).

The (6S)-5-formyl-5,6,7,8-tetrahydrofolate site is built by Arg-23, Glu-88, and Arg-127. Positions Gly-223–Phe-381 constitute a TrmE-type G domain. A K(+)-binding site is contributed by Asn-233. Residues Asn-233–Ser-238, Thr-252–Thr-258, and Asp-277–Gly-280 each bind GTP. Ser-237 serves as a coordination point for Mg(2+). Positions 252, 254, and 257 each coordinate K(+). Thr-258 contacts Mg(2+). Lys-459 is a (6S)-5-formyl-5,6,7,8-tetrahydrofolate binding site.

It belongs to the TRAFAC class TrmE-Era-EngA-EngB-Septin-like GTPase superfamily. TrmE GTPase family. In terms of assembly, homodimer. Heterotetramer of two MnmE and two MnmG subunits. K(+) serves as cofactor.

It is found in the cytoplasm. In terms of biological role, exhibits a very high intrinsic GTPase hydrolysis rate. Involved in the addition of a carboxymethylaminomethyl (cmnm) group at the wobble position (U34) of certain tRNAs, forming tRNA-cmnm(5)s(2)U34. In Clostridium novyi (strain NT), this protein is tRNA modification GTPase MnmE.